We begin with the raw amino-acid sequence, 147 residues long: Large ribosomal subunit protein bL9 (147 aa).

The interval Thr40 to Gln60 is disordered. Basic and acidic residues predominate over residues Lys45–Lys59.

The protein belongs to the bacterial ribosomal protein bL9 family.

Binds to the 23S rRNA. The polypeptide is Large ribosomal subunit protein bL9 (Exiguobacterium sibiricum (strain DSM 17290 / CCUG 55495 / CIP 109462 / JCM 13490 / 255-15)).